Reading from the N-terminus, the 196-residue chain is dTTP/UTP pyrophosphatase (196 aa).

Residue D77 is the Proton acceptor of the active site.

The protein belongs to the Maf family. YhdE subfamily. The cofactor is a divalent metal cation.

The protein localises to the cytoplasm. The catalysed reaction is dTTP + H2O = dTMP + diphosphate + H(+). It carries out the reaction UTP + H2O = UMP + diphosphate + H(+). Its function is as follows. Nucleoside triphosphate pyrophosphatase that hydrolyzes dTTP and UTP. May have a dual role in cell division arrest and in preventing the incorporation of modified nucleotides into cellular nucleic acids. This Christiangramia forsetii (strain DSM 17595 / CGMCC 1.15422 / KT0803) (Gramella forsetii) protein is dTTP/UTP pyrophosphatase.